The primary structure comprises 397 residues: Major capsid protein (397 aa).

The tract at residues 1-24 (MAAPDPYKPGKYNDPAGGVESSIG) is disordered.

It localises to the virion. Its function is as follows. Assembles to form an icosahedral capsid. The chain is Major capsid protein from Pseudomonas phage KPP21.